Reading from the N-terminus, the 108-residue chain is Glutaredoxin-1 (108 aa).

A Glutaredoxin domain is found at 3–106 (EEFVQQRLTN…DILSSIGVLR (104 aa)). Cysteine 23 and cysteine 26 form a disulfide bridge.

This sequence belongs to the glutaredoxin family.

It localises to the virion. Its function is as follows. Displays thioltransferase and dehydroascorbate reductase activities. In Variola virus (isolate Human/India/Ind3/1967) (VARV), this protein is Glutaredoxin-1 (OPG075).